We begin with the raw amino-acid sequence, 592 residues long: Putative phosphatidylinositol 4-kinase alpha-like protein P2 (592 aa).

Positions 180-318 (EQLVEENTGS…ISWQAAIFKL (139 aa)) are pleckstrin homology (PH) domain conferring phosphoinositide binding specificity. The PI3K/PI4K catalytic domain maps to 275–576 (KVKRCGVSEL…VIQSCFLSNR (302 aa)). The interval 281–287 (VSELEKE) is G-loop. Residues 441–449 (QIKDRHNGN) form a catalytic loop region. Positions 460–484 (HIDFGFMFESSPGGNLGWEPDIKLT) are activation loop.

This sequence belongs to the PI3/PI4-kinase family. Type III PI4K subfamily.

This is Putative phosphatidylinositol 4-kinase alpha-like protein P2 (PI4KAP2) from Homo sapiens (Human).